Here is a 128-residue protein sequence, read N- to C-terminus: Large ribosomal subunit protein uL22 (128 aa).

This sequence belongs to the universal ribosomal protein uL22 family. As to quaternary structure, part of the 50S ribosomal subunit.

This protein binds specifically to 23S rRNA; its binding is stimulated by other ribosomal proteins, e.g. L4, L17, and L20. It is important during the early stages of 50S assembly. It makes multiple contacts with different domains of the 23S rRNA in the assembled 50S subunit and ribosome. Its function is as follows. The globular domain of the protein is located near the polypeptide exit tunnel on the outside of the subunit, while an extended beta-hairpin is found that lines the wall of the exit tunnel in the center of the 70S ribosome. This Nitrobacter winogradskyi (strain ATCC 25391 / DSM 10237 / CIP 104748 / NCIMB 11846 / Nb-255) protein is Large ribosomal subunit protein uL22.